We begin with the raw amino-acid sequence, 262 residues long: Acyl-[acyl-carrier-protein]--UDP-N-acetylglucosamine O-acyltransferase (262 aa).

The protein belongs to the transferase hexapeptide repeat family. LpxA subfamily. As to quaternary structure, homotrimer.

It is found in the cytoplasm. The catalysed reaction is a (3R)-hydroxyacyl-[ACP] + UDP-N-acetyl-alpha-D-glucosamine = a UDP-3-O-[(3R)-3-hydroxyacyl]-N-acetyl-alpha-D-glucosamine + holo-[ACP]. The protein operates within glycolipid biosynthesis; lipid IV(A) biosynthesis; lipid IV(A) from (3R)-3-hydroxytetradecanoyl-[acyl-carrier-protein] and UDP-N-acetyl-alpha-D-glucosamine: step 1/6. Functionally, involved in the biosynthesis of lipid A, a phosphorylated glycolipid that anchors the lipopolysaccharide to the outer membrane of the cell. In Histophilus somni (strain 2336) (Haemophilus somnus), this protein is Acyl-[acyl-carrier-protein]--UDP-N-acetylglucosamine O-acyltransferase.